The sequence spans 273 residues: MKKIFSLALISLFAVILLAACGSKGSNGEASKESKKDTLAAIKDNDKIVFGVKTDTRLFGLKNPSSGEIEGFDIDIAKQIAKDILGDEKKAQFKEVTSKTRIPMLQNGDIDAIVATMTITEERKKEVDFSDVYFEAGQSLLVKKGSKIKSVENLGKGSKVLAVKGSTSSQNIREKAPEASVLEFENYAEAFTALKSGQGDALTTDNAILYGMADENKNYQLTGKPFTDEPYGIAVKKGQSALAKEINASLKKMKSDGRYDEIYKKWIKEDPAE.

An N-terminal signal peptide occupies residues Met1 to Ala20. A lipid anchor (N-palmitoyl cysteine) is attached at Cys21. Residue Cys21 is the site of S-diacylglycerol cysteine attachment.

The protein belongs to the bacterial solute-binding protein 3 family. As to quaternary structure, the complex is composed of two ATP-binding proteins (GlnQ), two transmembrane proteins (GlnM and GlnP) and a solute-binding protein (GlnH).

The protein resides in the cell membrane. Functionally, part of the ABC transporter complex GlnHMPQ involved in glutamine transport. The polypeptide is ABC transporter glutamine-binding protein GlnH (glnH) (Bacillus subtilis (strain 168)).